The primary structure comprises 232 residues: ATP-dependent Clp protease proteolytic subunit 2 (232 aa).

Residue S124 is the Nucleophile of the active site. H149 is an active-site residue.

The protein belongs to the peptidase S14 family. Fourteen ClpP subunits assemble into 2 heptameric rings which stack back to back to give a disk-like structure with a central cavity, resembling the structure of eukaryotic proteasomes.

It is found in the cytoplasm. The enzyme catalyses Hydrolysis of proteins to small peptides in the presence of ATP and magnesium. alpha-casein is the usual test substrate. In the absence of ATP, only oligopeptides shorter than five residues are hydrolyzed (such as succinyl-Leu-Tyr-|-NHMec, and Leu-Tyr-Leu-|-Tyr-Trp, in which cleavage of the -Tyr-|-Leu- and -Tyr-|-Trp bonds also occurs).. Functionally, cleaves peptides in various proteins in a process that requires ATP hydrolysis. Has a chymotrypsin-like activity. Plays a major role in the degradation of misfolded proteins. The chain is ATP-dependent Clp protease proteolytic subunit 2 from Nostoc sp. (strain PCC 7120 / SAG 25.82 / UTEX 2576).